A 347-amino-acid polypeptide reads, in one-letter code: Transcription factor JunB (347 aa).

Residues K4, K33, and K36 each participate in a glycyl lysine isopeptide (Lys-Gly) (interchain with G-Cter in SUMO2) cross-link. Residues L50 to G77 form a disordered region. Residues R56–S67 are compositionally biased toward gly residues. Positions Y68–G77 are enriched in polar residues. K81 participates in a covalent cross-link: Glycyl lysine isopeptide (Lys-Gly) (interchain with G-Cter in SUMO2). T102 and T104 each carry phosphothreonine. A Phosphoserine modification is found at S117. Residue K141 forms a Glycyl lysine isopeptide (Lys-Gly) (interchain with G-Cter in SUMO2) linkage. At K240 the chain carries N6-acetyllysine; alternate. K240 is covalently cross-linked (Glycyl lysine isopeptide (Lys-Gly) (interchain with G-Cter in SUMO1); alternate). K240 participates in a covalent cross-link: Glycyl lysine isopeptide (Lys-Gly) (interchain with G-Cter in SUMO2); alternate. Residues E241–D253 are compositionally biased toward basic and acidic residues. Residues E241–P260 are disordered. At S251 the chain carries Phosphoserine. Position 255 is a phosphothreonine (T255). Residue S259 is modified to Phosphoserine. Residues R268–R295 are basic motif. Residues R268 to H331 form the bZIP domain. The segment at L296–L324 is leucine-zipper. A Glycyl lysine isopeptide (Lys-Gly) (interchain with G-Cter in SUMO2) cross-link involves residue K343.

It belongs to the bZIP family. Jun subfamily. In terms of assembly, binds DNA as a homodimer or as a heterodimer with another member of the Jun/Fos family. Component of an AP-1 transcription factor complex composed of JUN-FOS heterodimers. As part of the AP-1 transcription factor complex, forms heterodimers with FOSB, thereby binding to the AP-1 consensus sequence and stimulating transcription. Interacts with ITCH (via its WW domains). In terms of processing, ubiquitinated by ITCH, leading to its degradation.

It localises to the nucleus. In terms of biological role, transcription factor involved in regulating gene activity following the primary growth factor response. Binds to the DNA sequence 5'-TGA[GC]TCA-3'. Heterodimerizes with proteins of the FOS family to form an AP-1 transcription complex, thereby enhancing its DNA binding activity to an AP-1 consensus sequence and its transcriptional activity. The chain is Transcription factor JunB (JUNB) from Bos taurus (Bovine).